The sequence spans 425 residues: MNNIVIVGLQWGDEGKGKIVDYLSENADVVVRFQGGNNAGHTIVIDDEVYKLNLLPSAVLRADKISIIGNGVALDSHALVSEIESLKVKGVDVNYNNLMVSESCPLILSVHKDKEKLFEDLNGNHKIGTTNKGIGPCYEDKVGRRAIRLCDLENTDELNQRVDALLSYHNAIRKGLNYQVVKKEEILKEIQEISEKILLYKKPVWKILNDFMKEGKKIIFEGAQGAFLDIDHGTYPFVTSSNTVASQAITGSGLSYNAQIIGVAKAYTTRVGNGPFPTEQNNEIGDSLFSIGKELGTVSNRRRRCGWFDAVLVRQAVQLSGVSSIVLTKLDILDSFDTIKIGTGYKYGGKMYDYLPASHSIQKELEPIYEEFPGWKEKTQGKRSVKELPANLMKYVRKIEELIGVPIHLISTSPNREDVIKLKNL.

Residues 12–18 and 40–42 each bind GTP; these read GDEGKGK and GHT. Asp13 (proton acceptor) is an active-site residue. Mg(2+)-binding residues include Asp13 and Gly40. IMP-binding positions include 13–16, 38–41, Thr130, Arg144, Gln224, Thr239, and Arg301; these read DEGK and NAGH. Catalysis depends on His41, which acts as the Proton donor. 297–303 contributes to the substrate binding site; it reads TVSNRRR. GTP contacts are provided by residues Arg303, 329 to 331, and 411 to 413; these read KLD and STS.

This sequence belongs to the adenylosuccinate synthetase family. As to quaternary structure, homodimer. Mg(2+) is required as a cofactor.

It localises to the cytoplasm. The catalysed reaction is IMP + L-aspartate + GTP = N(6)-(1,2-dicarboxyethyl)-AMP + GDP + phosphate + 2 H(+). It participates in purine metabolism; AMP biosynthesis via de novo pathway; AMP from IMP: step 1/2. In terms of biological role, plays an important role in the de novo pathway of purine nucleotide biosynthesis. Catalyzes the first committed step in the biosynthesis of AMP from IMP. In Wolbachia pipientis subsp. Culex pipiens (strain wPip), this protein is Adenylosuccinate synthetase.